Reading from the N-terminus, the 246-residue chain is NAD(P)H-quinone oxidoreductase subunit K (246 aa).

Cys-62, Cys-63, Cys-127, and Cys-158 together coordinate [4Fe-4S] cluster.

The protein belongs to the complex I 20 kDa subunit family. NDH-1 can be composed of about 15 different subunits; different subcomplexes with different compositions have been identified which probably have different functions. It depends on [4Fe-4S] cluster as a cofactor.

It localises to the cellular thylakoid membrane. It carries out the reaction a plastoquinone + NADH + (n+1) H(+)(in) = a plastoquinol + NAD(+) + n H(+)(out). The enzyme catalyses a plastoquinone + NADPH + (n+1) H(+)(in) = a plastoquinol + NADP(+) + n H(+)(out). Functionally, NDH-1 shuttles electrons from an unknown electron donor, via FMN and iron-sulfur (Fe-S) centers, to quinones in the respiratory and/or the photosynthetic chain. The immediate electron acceptor for the enzyme in this species is believed to be plastoquinone. Couples the redox reaction to proton translocation, and thus conserves the redox energy in a proton gradient. Cyanobacterial NDH-1 also plays a role in inorganic carbon-concentration. In Parasynechococcus marenigrum (strain WH8102), this protein is NAD(P)H-quinone oxidoreductase subunit K.